Consider the following 169-residue polypeptide: Lipoprotein signal peptidase (169 aa).

Residues 1–9 (MPDVDRFGR) are Cytoplasmic-facing. The helical transmembrane segment at 10–30 (LPWLWITVLVFVLDQVSKAFF) threads the bilayer. Over 31 to 67 (QAELSMYQQIVVIPDLFSWTLAYNTGAAFSFLADSSG) the chain is Periplasmic. Residues 68–89 (WQRWLFALIAIVVSASLVVWLK) traverse the membrane as a helical segment. Residues 90 to 96 (RLKKGET) are Cytoplasmic-facing. A helical membrane pass occupies residues 97-118 (WLAIALALVLGGALGNLYDRMV). Residues 119–140 (LGHVVDFILVHWQNRWYFPAFN) are Periplasmic-facing. Residues Asp124 and Asp143 contribute to the active site. A helical membrane pass occupies residues 141–154 (LADSAITVGAVMLA). Residues 155–169 (LDMFRSKKSGEAAHG) are Cytoplasmic-facing.

It belongs to the peptidase A8 family. As to quaternary structure, monomer in the crystal.

Its subcellular location is the cell inner membrane. It carries out the reaction Release of signal peptides from bacterial membrane prolipoproteins. Hydrolyzes -Xaa-Yaa-Zaa-|-(S,diacylglyceryl)Cys-, in which Xaa is hydrophobic (preferably Leu), and Yaa (Ala or Ser) and Zaa (Gly or Ala) have small, neutral side chains.. It participates in protein modification; lipoprotein biosynthesis (signal peptide cleavage). Inhibited by globomycin. Its function is as follows. This protein specifically catalyzes the removal of signal peptides from prolipoproteins. The sequence is that of Lipoprotein signal peptidase from Pseudomonas aeruginosa (strain ATCC 15692 / DSM 22644 / CIP 104116 / JCM 14847 / LMG 12228 / 1C / PRS 101 / PAO1).